A 59-amino-acid chain; its full sequence is Conotoxin ViVA (59 aa).

The signal sequence occupies residues 1-19 (MRCVPVFIILLLLIPSASS). Residues 20–46 (AAVQPKTEKDDVPLASVHDSALRILSR) constitute a propeptide that is removed on maturation. Q47 is modified (pyrrolidone carboxylic acid). Cystine bridges form between C48–C55 and C49–C56. I58 is subject to Isoleucine amide.

Belongs to the conotoxin T superfamily. Expressed by the venom duct.

It localises to the secreted. The chain is Conotoxin ViVA from Conus virgo (Virgin cone).